The chain runs to 162 residues: Putative ureidoglycolate lyase (162 aa).

The protein belongs to the ureidoglycolate lyase family. In terms of assembly, homodimer. The cofactor is Ni(2+).

The enzyme catalyses (S)-ureidoglycolate = urea + glyoxylate. It participates in nitrogen metabolism; (S)-allantoin degradation. Functionally, catalyzes the catabolism of the allantoin degradation intermediate (S)-ureidoglycolate, generating urea and glyoxylate. Involved in the utilization of allantoin as nitrogen source. The sequence is that of Putative ureidoglycolate lyase from Agrobacterium fabrum (strain C58 / ATCC 33970) (Agrobacterium tumefaciens (strain C58)).